The sequence spans 894 residues: Microsomal triglyceride transfer protein large subunit (894 aa).

Residues 1–18 (MILLAVLFLCFISSYSAS) form the signal peptide. The 632-residue stretch at 28-659 (LNNDRLYKLT…IFQYIGKAGL (632 aa)) folds into the Vitellogenin domain. Cys174 and Cys194 are joined by a disulfide.

As to quaternary structure, heterodimer; heterodimerizes with the protein disulfide isomerase (P4HB/PDI). Interacts with APOB. Interacts with PRAP1. In terms of tissue distribution, liver and small intestine. Also found in ovary, testis and kidney.

The protein localises to the endoplasmic reticulum. It localises to the golgi apparatus. The enzyme catalyses a 1,2-diacyl-sn-glycero-3-phosphocholine(in) = a 1,2-diacyl-sn-glycero-3-phosphocholine(out). The catalysed reaction is a 1,2-diacyl-sn-glycero-3-phosphoethanolamine(in) = a 1,2-diacyl-sn-glycero-3-phosphoethanolamine(out). It carries out the reaction a cholesterol ester(in) = a cholesterol ester(out). It catalyses the reaction a triacyl-sn-glycerol(in) = a triacyl-sn-glycerol(out). Functionally, catalyzes the transport of triglyceride, cholesteryl ester, and phospholipid between phospholipid surfaces. Required for the assembly and secretion of plasma lipoproteins that contain apolipoprotein B. May be involved in regulating cholesteryl ester biosynthesis in cells that produce lipoproteins. The sequence is that of Microsomal triglyceride transfer protein large subunit (MTTP) from Homo sapiens (Human).